Consider the following 238-residue polypeptide: Lipoprotein-releasing system ATP-binding protein LolD (238 aa).

One can recognise an ABC transporter domain in the interval 6-238 (LVCQGIRKVY…RSSLAQEMEA (233 aa)). ATP is bound at residue 42–49 (GSSGSGKS).

Belongs to the ABC transporter superfamily. Lipoprotein translocase (TC 3.A.1.125) family. The complex is composed of two ATP-binding proteins (LolD) and two transmembrane proteins (LolC and LolE).

It localises to the cell inner membrane. Part of the ABC transporter complex LolCDE involved in the translocation of mature outer membrane-directed lipoproteins, from the inner membrane to the periplasmic chaperone, LolA. Responsible for the formation of the LolA-lipoprotein complex in an ATP-dependent manner. This chain is Lipoprotein-releasing system ATP-binding protein LolD, found in Aliivibrio fischeri (strain ATCC 700601 / ES114) (Vibrio fischeri).